A 144-amino-acid polypeptide reads, in one-letter code: uncharacterized protein (144 aa).

N-linked (GlcNAc...) asparagine glycosylation is found at Asn14 and Asn15. Residues 90–110 (FSWFIFGLFIACLLLCITLVL) form a helical membrane-spanning segment. The disordered stretch occupies residues 120-144 (NKATEVVPSSNIDDEEKQLSLSDMI).

Its subcellular location is the membrane. This is an uncharacterized protein from Saccharomyces cerevisiae (strain ATCC 204508 / S288c) (Baker's yeast).